A 104-amino-acid chain; its full sequence is MIPGEVFCAEGVIELNEGAPRTELDVVNTGDRPVQVGSHVHFPQANHALQFDRSAAHGLRLDIPAGTAVRFEPGIAQTVVLVPLRGTREVHGLSLTPPGKLDAS.

The protein belongs to the urease beta subunit family. As to quaternary structure, heterotrimer of UreA (gamma), UreB (beta) and UreC (alpha) subunits. Three heterotrimers associate to form the active enzyme.

The protein localises to the cytoplasm. The catalysed reaction is urea + 2 H2O + H(+) = hydrogencarbonate + 2 NH4(+). It functions in the pathway nitrogen metabolism; urea degradation; CO(2) and NH(3) from urea (urease route): step 1/1. The polypeptide is Urease subunit beta (Rhodococcus opacus (strain B4)).